Consider the following 704-residue polypeptide: Phosphate acetyltransferase (704 aa).

Positions 380-704 (FNLIEKAKRN…IQAQAEKGLI (325 aa)) are phosphate acetyltransferase.

This sequence in the N-terminal section; belongs to the CobB/CobQ family. The protein in the C-terminal section; belongs to the phosphate acetyltransferase and butyryltransferase family. As to quaternary structure, homohexamer.

It is found in the cytoplasm. The catalysed reaction is acetyl-CoA + phosphate = acetyl phosphate + CoA. It functions in the pathway metabolic intermediate biosynthesis; acetyl-CoA biosynthesis; acetyl-CoA from acetate: step 2/2. Its function is as follows. Involved in acetate metabolism. The chain is Phosphate acetyltransferase (pta) from Nitratidesulfovibrio vulgaris (strain ATCC 29579 / DSM 644 / CCUG 34227 / NCIMB 8303 / VKM B-1760 / Hildenborough) (Desulfovibrio vulgaris).